The following is a 481-amino-acid chain: Autolysin (481 aa).

One can recognise a Peptidase C51 domain in the interval 7-142 (KNEFIERLKT…LQDDNMLMIS (136 aa)). Residues 198 to 323 (SNPKGIVIHN…NEFTSTSCPH (126 aa)) enclose the N-acetylmuramoyl-L-alanine amidase domain. One can recognise an SH3b domain in the interval 398-466 (EESARFTNGN…YLPIRTWNGS (69 aa)).

Belongs to the N-acetylmuramoyl-L-alanine amidase 2 family.

It localises to the secreted. It carries out the reaction Hydrolyzes the link between N-acetylmuramoyl residues and L-amino acid residues in certain cell-wall glycopeptides.. Autolysins are involved in some important biological processes such as cell separation, cell-wall turnover, competence for genetic transformation, formation of the flagella and sporulation. Autolysin strictly depends on the presence of choline-containing cell walls for activity. This is Autolysin (lytA) from Staphylococcus aureus.